Consider the following 347-residue polypeptide: Holliday junction branch migration complex subunit RuvB (347 aa).

The tract at residues 1-180 (MTSRVVSPEQ…FGIPCRMNFY (180 aa)) is large ATPase domain (RuvB-L). ATP-binding positions include leucine 19, arginine 20, glycine 61, lysine 64, threonine 65, threonine 66, 127 to 129 (EDF), arginine 170, tyrosine 180, and arginine 217. Residue threonine 65 participates in Mg(2+) binding. Residues 181-251 (EPAELEAIVS…VADAALNRLE (71 aa)) are small ATPAse domain (RuvB-S). The segment at 254–347 (RIGLDAMDRR…LLTRMDEEGE (94 aa)) is head domain (RuvB-H). DNA-binding residues include arginine 290, arginine 309, and arginine 314.

The protein belongs to the RuvB family. In terms of assembly, homohexamer. Forms an RuvA(8)-RuvB(12)-Holliday junction (HJ) complex. HJ DNA is sandwiched between 2 RuvA tetramers; dsDNA enters through RuvA and exits via RuvB. An RuvB hexamer assembles on each DNA strand where it exits the tetramer. Each RuvB hexamer is contacted by two RuvA subunits (via domain III) on 2 adjacent RuvB subunits; this complex drives branch migration. In the full resolvosome a probable DNA-RuvA(4)-RuvB(12)-RuvC(2) complex forms which resolves the HJ.

The protein resides in the cytoplasm. It catalyses the reaction ATP + H2O = ADP + phosphate + H(+). Functionally, the RuvA-RuvB-RuvC complex processes Holliday junction (HJ) DNA during genetic recombination and DNA repair, while the RuvA-RuvB complex plays an important role in the rescue of blocked DNA replication forks via replication fork reversal (RFR). RuvA specifically binds to HJ cruciform DNA, conferring on it an open structure. The RuvB hexamer acts as an ATP-dependent pump, pulling dsDNA into and through the RuvAB complex. RuvB forms 2 homohexamers on either side of HJ DNA bound by 1 or 2 RuvA tetramers; 4 subunits per hexamer contact DNA at a time. Coordinated motions by a converter formed by DNA-disengaged RuvB subunits stimulates ATP hydrolysis and nucleotide exchange. Immobilization of the converter enables RuvB to convert the ATP-contained energy into a lever motion, pulling 2 nucleotides of DNA out of the RuvA tetramer per ATP hydrolyzed, thus driving DNA branch migration. The RuvB motors rotate together with the DNA substrate, which together with the progressing nucleotide cycle form the mechanistic basis for DNA recombination by continuous HJ branch migration. Branch migration allows RuvC to scan DNA until it finds its consensus sequence, where it cleaves and resolves cruciform DNA. In Paramagnetospirillum magneticum (strain ATCC 700264 / AMB-1) (Magnetospirillum magneticum), this protein is Holliday junction branch migration complex subunit RuvB.